Consider the following 308-residue polypeptide: Malonate utilization transcriptional regulator (308 aa).

In terms of domain architecture, HTH lysR-type spans 9–66; that stretch reads ITFRKLSVFMMFMAKGNIARTAEAMKLSSVSVHRALHTLEEGVGCPLFVHKGRNLLPL. A DNA-binding region (H-T-H motif) is located at residues 26–45; sequence IARTAEAMKLSSVSVHRALH.

The protein belongs to the LysR transcriptional regulatory family.

Its function is as follows. Transcriptional regulator of the mau genes for malonate utilization. This is Malonate utilization transcriptional regulator (mauR) from Klebsiella pneumoniae.